The sequence spans 549 residues: Probable glucuronosyltransferase Os01g0157700 (549 aa).

The Cytoplasmic segment spans residues 1–16 (MDSEERSKKRLRLWSR). The chain crosses the membrane as a helical; Signal-anchor for type II membrane protein span at residues 17 to 37 (AVVHFSLCFAIGVFAALLPLA). Residues 38-549 (ATGATSIDSI…TPEEGKTKEG (512 aa)) are Lumenal-facing. 9 N-linked (GlcNAc...) asparagine glycosylation sites follow: Asn112, Asn139, Asn214, Asn229, Asn240, Asn251, Asn264, Asn269, and Asn300. Residues 232-252 (ETTWDSSSNTTQTTWDSSSNK) are disordered. The segment covering 350–363 (IEQATPEKESLTKG) has biased composition (basic and acidic residues). Disordered regions lie at residues 350-371 (IEQATPEKESLTKGDEEESHDM), 413-432 (EQETPEKENLTKGEEKESHD), and 441-524 (KIEE…KETH). Residues Asn421 and Asn452 are each glycosylated (N-linked (GlcNAc...) asparagine). 3 stretches are compositionally biased toward basic and acidic residues: residues 441 to 465 (KIEEQETPEKENLTKGDEKESHDMM), 472 to 496 (KIDEQETTEKESLTKGDEKESHDMM), and 503 to 524 (KIEEQETPEKESLTKGDEKETH).

The protein belongs to the glycosyltransferase 43 family.

It localises to the golgi apparatus membrane. Involved in the synthesis of glucuronoxylan hemicellulose in secondary cell walls. The sequence is that of Probable glucuronosyltransferase Os01g0157700 from Oryza sativa subsp. japonica (Rice).